The following is a 127-amino-acid chain: Phosphoribosyl-AMP cyclohydrolase (127 aa).

Asp75 is a binding site for Mg(2+). Zn(2+) is bound at residue Cys76. Residues Asp77 and Asp79 each coordinate Mg(2+). Zn(2+) contacts are provided by Cys93 and Cys100.

Belongs to the PRA-CH family. As to quaternary structure, homodimer. It depends on Mg(2+) as a cofactor. The cofactor is Zn(2+).

It is found in the cytoplasm. The catalysed reaction is 1-(5-phospho-beta-D-ribosyl)-5'-AMP + H2O = 1-(5-phospho-beta-D-ribosyl)-5-[(5-phospho-beta-D-ribosylamino)methylideneamino]imidazole-4-carboxamide. The protein operates within amino-acid biosynthesis; L-histidine biosynthesis; L-histidine from 5-phospho-alpha-D-ribose 1-diphosphate: step 3/9. Its function is as follows. Catalyzes the hydrolysis of the adenine ring of phosphoribosyl-AMP. This chain is Phosphoribosyl-AMP cyclohydrolase, found in Desulfotalea psychrophila (strain LSv54 / DSM 12343).